The following is a 76-amino-acid chain: uncharacterized protein (76 aa).

Helical transmembrane passes span 1-21 (MTAI…HLQL), 35-55 (CFDI…LLII), and 56-76 (NNKF…NTMI).

The protein localises to the cell membrane. This is an uncharacterized protein from Borreliella burgdorferi (strain ATCC 35210 / DSM 4680 / CIP 102532 / B31) (Borrelia burgdorferi).